We begin with the raw amino-acid sequence, 335 residues long: Phosphate acyltransferase (335 aa).

The protein belongs to the PlsX family. In terms of assembly, homodimer. Probably interacts with PlsY.

The protein resides in the cytoplasm. It carries out the reaction a fatty acyl-[ACP] + phosphate = an acyl phosphate + holo-[ACP]. It functions in the pathway lipid metabolism; phospholipid metabolism. In terms of biological role, catalyzes the reversible formation of acyl-phosphate (acyl-PO(4)) from acyl-[acyl-carrier-protein] (acyl-ACP). This enzyme utilizes acyl-ACP as fatty acyl donor, but not acyl-CoA. In Heliobacterium modesticaldum (strain ATCC 51547 / Ice1), this protein is Phosphate acyltransferase.